The chain runs to 165 residues: MAHVALYPGSFDPVTNGHVDVVRQACTLVDRLIVAIGVHPGKAPLFSVDERRAMIVEVFSPLAATTGCAIECVTFDNLTVAAAEKSGATILIRGLRDGTDLDYEMQIAGMNQTLVPSVQTIFIPASPTVRPITATLVRQIASMGGDVSAFVPKAVAARLKAKFSQ.

S10 is a substrate binding site. Residues S10–F11 and H18 each bind ATP. Residues K42, T79, and R93 each coordinate substrate. ATP-binding positions include G94–R96, E104, and V129–T135.

It belongs to the bacterial CoaD family. As to quaternary structure, homohexamer. Mg(2+) is required as a cofactor.

It localises to the cytoplasm. It catalyses the reaction (R)-4'-phosphopantetheine + ATP + H(+) = 3'-dephospho-CoA + diphosphate. Its pathway is cofactor biosynthesis; coenzyme A biosynthesis; CoA from (R)-pantothenate: step 4/5. Its function is as follows. Reversibly transfers an adenylyl group from ATP to 4'-phosphopantetheine, yielding dephospho-CoA (dPCoA) and pyrophosphate. The polypeptide is Phosphopantetheine adenylyltransferase (Afipia carboxidovorans (strain ATCC 49405 / DSM 1227 / KCTC 32145 / OM5) (Oligotropha carboxidovorans)).